The following is a 196-amino-acid chain: Pyridoxal 5'-phosphate synthase subunit PdxT (196 aa).

Residue 47-49 coordinates L-glutamine; that stretch reads GES. Residue Cys-79 is the Nucleophile of the active site. Residues Arg-106 and 134–135 each bind L-glutamine; that span reads IR. Active-site charge relay system residues include His-170 and Glu-172.

This sequence belongs to the glutaminase PdxT/SNO family. As to quaternary structure, in the presence of PdxS, forms a dodecamer of heterodimers. Only shows activity in the heterodimer.

It catalyses the reaction aldehydo-D-ribose 5-phosphate + D-glyceraldehyde 3-phosphate + L-glutamine = pyridoxal 5'-phosphate + L-glutamate + phosphate + 3 H2O + H(+). The catalysed reaction is L-glutamine + H2O = L-glutamate + NH4(+). The protein operates within cofactor biosynthesis; pyridoxal 5'-phosphate biosynthesis. Its function is as follows. Catalyzes the hydrolysis of glutamine to glutamate and ammonia as part of the biosynthesis of pyridoxal 5'-phosphate. The resulting ammonia molecule is channeled to the active site of PdxS. This chain is Pyridoxal 5'-phosphate synthase subunit PdxT, found in Bacillus thuringiensis subsp. konkukian (strain 97-27).